The primary structure comprises 494 residues: UDP-N-acetylmuramoyl-L-alanyl-D-glutamate--L-lysine ligase (494 aa).

S30 is a UDP-N-acetyl-alpha-D-muramoyl-L-alanyl-D-glutamate binding site. Residue 110 to 116 participates in ATP binding; that stretch reads GTNGKTS. UDP-N-acetyl-alpha-D-muramoyl-L-alanyl-D-glutamate contacts are provided by residues 152–153, S179, and R187; that span reads TT. Position 219 is an N6-carboxylysine (K219). The L-lysine recognition motif signature appears at 406 to 409; that stretch reads DNPA.

It belongs to the MurCDEF family. MurE subfamily. Carboxylation is probably crucial for Mg(2+) binding and, consequently, for the gamma-phosphate positioning of ATP.

Its subcellular location is the cytoplasm. It carries out the reaction UDP-N-acetyl-alpha-D-muramoyl-L-alanyl-D-glutamate + L-lysine + ATP = UDP-N-acetyl-alpha-D-muramoyl-L-alanyl-gamma-D-glutamyl-L-lysine + ADP + phosphate + H(+). Its pathway is cell wall biogenesis; peptidoglycan biosynthesis. In terms of biological role, catalyzes the addition of L-lysine to the nucleotide precursor UDP-N-acetylmuramoyl-L-alanyl-D-glutamate (UMAG) in the biosynthesis of bacterial cell-wall peptidoglycan. The polypeptide is UDP-N-acetylmuramoyl-L-alanyl-D-glutamate--L-lysine ligase (Staphylococcus haemolyticus (strain JCSC1435)).